A 533-amino-acid chain; its full sequence is Cytochrome P450 monooxygenase calL (533 aa).

Residues 8–28 (TQLALLVWGIAVCVTLAIVVP) form a helical membrane-spanning segment. N-linked (GlcNAc...) asparagine glycosylation occurs at N33. Residues 123–148 (GKFKQDQSGRSKNPVPGHDVKPGQPR) are disordered. The N-linked (GlcNAc...) asparagine glycan is linked to N388. C467 contacts heme.

This sequence belongs to the cytochrome P450 family. Heme serves as cofactor.

The protein localises to the membrane. Its pathway is secondary metabolite biosynthesis. In terms of biological role, cytochrome P450 monooxygenase; part of the gene cluster that mediates the biosynthesis of calbistrin A and related compounds. Calbistrin A is a secondary metabolite with an interesting structure that was recently found to have bioactivity against leukemia cells. It consists of two polyketides linked by an ester bond: a bicyclic decalin containing polyketide and a linear 12 carbon dioic acid structure. The polyketide synthase calA is probably responsible for forming the decalin moiety. Because calA lacks a designated enoylreductase (ER) domain, the required activity is provided by the trans-enoyl reductase calK. Following release from the PKS, calF then probably catalyzes the oxidation and the subsequent Diels Alder cycloisomerization that lead to the formation of the decalin moiety. The decalin polyketide backbone includes two C-methyl groups, at C7 and C11 in backbone, of which the C7 position is probably methylated by the methyltransferase domain of calA. A candidate for adding the methyl group at C11, if not done by CalA, is the cluster methyltransferase calH. Several additional tailoring enzymes within the cluster could be involved in the modification of the decalin polyketide product. Those include the 3 cytochrome P450 monooxygenases CalE, CalG and CalL, of which one might be responsible for the introduction of the extra hydroxyl group attached to the backbone of the decalin moiety, at position C9 in the backbone, that allows for attachment of the linear moiety. One tailoring enzyme activity that is expected to be involved in biosynthesis of calbistrin is an acyltransferase for connecting the two polyketide synthase products, and which could be performed by the cluster acyltransferase calJ. The enzyme responsible for the biosynthesis of the linear moiety, probably a second PKS, has not been identified yet. This is Cytochrome P450 monooxygenase calL from Penicillium decumbens.